The sequence spans 220 residues: Inner membrane protein YqjA (220 aa).

Residues 1 to 27 (MELLTQLLQALWAQDFETLANPSMIGM) lie on the Periplasmic side of the membrane. A helical transmembrane segment spans residues 28-48 (LYFVLFVILFLENGLLPAAFL). Topologically, residues 49 to 52 (PGDS) are cytoplasmic. The next 2 membrane-spanning stretches (helical) occupy residues 53-73 (LLVL…QTIL) and 74-94 (LLTV…RWLG). Residues 95-154 (NTRTVQNWLSHLPAHYHQRAHHLFHKHGLSALLIGRFIAFVRTLLPTIAGLSGLNNARFQ) are Cytoplasmic-facing. A helical transmembrane segment spans residues 155-175 (FFNWMSGLLWVLILTTLGYML). Residues 176–191 (GKTPVFLKYEDQLMSC) lie on the Periplasmic side of the membrane. The chain crosses the membrane as a helical span at residues 192 to 212 (LMLLPVVLLVFGLAGSLVVLW). The Cytoplasmic segment spans residues 213–220 (KKKYGNRG).

It belongs to the DedA family.

It localises to the cell inner membrane. Functionally, may be a membrane transporter required for proton motive force (PMF)-dependent drug efflux. Required, with YghB, for the proper export of certain periplasmic amidases and, possibly, other Tat substrates. May play a role in determining membrane lipid composition. The polypeptide is Inner membrane protein YqjA (yqjA) (Escherichia coli (strain K12)).